We begin with the raw amino-acid sequence, 217 residues long: MVCPSPLRECHPFLQRSFFPSFALSHRDIISTRACLNDNSPAFDRRYHWVWEEDRRCLNLGKTLASTIHHKGGNLSLQWQRGNTTTHIATRWDANKLLLARAILKEKRNILQDKTSVNVNVNKLIPIPKKKVLKNRAKSLLSIKSHVHFHLIPFINFFLLYHQIILSHSLFHISHLISFHFLFFSFLSFPLLSFILFPCFSLFLSSNSFSLASPFSS.

Transmembrane regions (helical) follow at residues 151–171 and 177–197; these read LIPFINFFLLYHQIILSHSLF and ISFHFLFFSFLSFPLLSFILF.

It is found in the mitochondrion membrane. This is an uncharacterized protein from Schizosaccharomyces pombe (strain 972 / ATCC 24843) (Fission yeast).